The chain runs to 217 residues: Probable ribonuclease P protein subunit 1 (217 aa).

This sequence belongs to the eukaryotic/archaeal RNase P protein component 1 family.

Its subcellular location is the nucleus. It is found in the nucleolus. The catalysed reaction is Endonucleolytic cleavage of RNA, removing 5'-extranucleotides from tRNA precursor.. Part of ribonuclease P, a protein complex that generates mature tRNA molecules by cleaving their 5'-ends. This is Probable ribonuclease P protein subunit 1 from Schizosaccharomyces pombe (strain 972 / ATCC 24843) (Fission yeast).